Here is a 489-residue protein sequence, read N- to C-terminus: IPT/TIG domain-containing protein BACOVA_02650 (489 aa).

Positions M1–S27 are cleaved as a signal peptide. C28 carries the N-palmitoyl cysteine lipid modification. C28 is lipidated: S-diacylglycerol cysteine. 3 consecutive IPT/TIG domains span residues V57–L103, P136–A204, and P232–G304.

It localises to the cell outer membrane. The protein operates within glucan metabolism; xyloglucan degradation. Its function is as follows. Polysaccharide-binding protein present at the surface of the cell. Probably mediates xyloglucan-binding before xyloglucan transport in the periplasm for degradation. In Bacteroides ovatus (strain ATCC 8483 / DSM 1896 / JCM 5824 / BCRC 10623 / CCUG 4943 / NCTC 11153), this protein is IPT/TIG domain-containing protein BACOVA_02650.